Reading from the N-terminus, the 216-residue chain is Large ribosomal subunit protein uL1B (216 aa).

At Ser-11 the chain carries Phosphoserine.

This sequence belongs to the universal ribosomal protein uL1 family. Component of the large ribosomal subunit (LSU). Mature yeast ribosomes consist of a small (40S) and a large (60S) subunit. The 40S small subunit contains 1 molecule of ribosomal RNA (18S rRNA) and at least 33 different proteins. The large 60S subunit contains 3 rRNA molecules (25S, 5.8S and 5S rRNA) and at least 46 different proteins. uL1 forms part of the L1 stalk.

The protein localises to the cytoplasm. Its function is as follows. Component of the ribosome, a large ribonucleoprotein complex responsible for the synthesis of proteins in the cell. The small ribosomal subunit (SSU) binds messenger RNAs (mRNAs) and translates the encoded message by selecting cognate aminoacyl-transfer RNA (tRNA) molecules. The large subunit (LSU) contains the ribosomal catalytic site termed the peptidyl transferase center (PTC), which catalyzes the formation of peptide bonds, thereby polymerizing the amino acids delivered by tRNAs into a polypeptide chain. The nascent polypeptides leave the ribosome through a tunnel in the LSU and interact with protein factors that function in enzymatic processing, targeting, and the membrane insertion of nascent chains at the exit of the ribosomal tunnel. uL1 forms part of the L1 stalk, a mobile element that plays a role in evacuating the exit-site tRNA. This Schizosaccharomyces pombe (strain 972 / ATCC 24843) (Fission yeast) protein is Large ribosomal subunit protein uL1B (rpl101).